A 101-amino-acid polypeptide reads, in one-letter code: Replication restart protein PriB (101 aa).

Positions 1 to 101 constitute an SSB domain; sequence MTTNNLVLSG…IHAENVELKT (101 aa).

This sequence belongs to the PriB family. As to quaternary structure, homodimer. Interacts with PriA and DnaT. Component of the replication restart primosome. Primosome assembly occurs via a 'hand-off' mechanism. PriA binds to replication forks, subsequently PriB then DnaT bind; DnaT then displaces ssDNA to generate the helicase loading substrate.

Functionally, involved in the restart of stalled replication forks, which reloads the replicative helicase on sites other than the origin of replication; the PriA-PriB pathway is the major replication restart pathway. During primosome assembly it facilitates complex formation between PriA and DnaT on DNA; stabilizes PriA on DNA. Stimulates the DNA unwinding activity of PriA helicase. This Shewanella baltica (strain OS223) protein is Replication restart protein PriB.